Reading from the N-terminus, the 237-residue chain is Ergosterol biosynthesis protein 29 (237 aa).

The chain crosses the membrane as a helical span at residues 36 to 56; sequence ITLFLIVVGTLAFFNELYITI.

It localises to the endoplasmic reticulum membrane. In terms of biological role, part of the third module of ergosterol biosynthesis pathway that includes the late steps of the pathway. ERG29 regulates the activity of the iron-containing C4-methylsterol oxidase ERG25. The third module or late pathway involves the ergosterol synthesis itself through consecutive reactions that mainly occur in the endoplasmic reticulum (ER) membrane. Firstly, the squalene synthase ERG9 catalyzes the condensation of 2 farnesyl pyrophosphate moieties to form squalene, which is the precursor of all steroids. Squalene synthase is crucial for balancing the incorporation of farnesyl diphosphate (FPP) into sterol and nonsterol isoprene synthesis. Secondly, the squalene epoxidase ERG1 catalyzes the stereospecific oxidation of squalene to (S)-2,3-epoxysqualene, which is considered to be a rate-limiting enzyme in steroid biosynthesis. Then, the lanosterol synthase ERG7 catalyzes the cyclization of (S)-2,3 oxidosqualene to lanosterol, a reaction that forms the sterol core. In the next steps, lanosterol is transformed to zymosterol through a complex process involving various demethylation, reduction and desaturation reactions. The lanosterol 14-alpha-demethylase ERG11 (also known as CYP51) catalyzes C14-demethylation of lanosterol to produce 4,4'-dimethyl cholesta-8,14,24-triene-3-beta-ol, which is critical for ergosterol biosynthesis. The C-14 reductase ERG24 reduces the C14=C15 double bond of 4,4-dimethyl-cholesta-8,14,24-trienol to produce 4,4-dimethyl-cholesta-8,24-dienol. 4,4-dimethyl-cholesta-8,24-dienol is substrate of the C-4 demethylation complex ERG25-ERG26-ERG27 in which ERG25 catalyzes the three-step monooxygenation required for the demethylation of 4,4-dimethyl and 4alpha-methylsterols, ERG26 catalyzes the oxidative decarboxylation that results in a reduction of the 3-beta-hydroxy group at the C-3 carbon to an oxo group, and ERG27 is responsible for the reduction of the keto group on the C-3. ERG28 has a role as a scaffold to help anchor ERG25, ERG26 and ERG27 to the endoplasmic reticulum and ERG29 regulates the activity of the iron-containing C4-methylsterol oxidase ERG25. Then, the sterol 24-C-methyltransferase ERG6 catalyzes the methyl transfer from S-adenosyl-methionine to the C-24 of zymosterol to form fecosterol. The C-8 sterol isomerase ERG2 catalyzes the reaction which results in unsaturation at C-7 in the B ring of sterols and thus converts fecosterol to episterol. The sterol-C5-desaturase ERG3 then catalyzes the introduction of a C-5 double bond in the B ring to produce 5-dehydroepisterol. The C-22 sterol desaturase ERG5 further converts 5-dehydroepisterol into ergosta-5,7,22,24(28)-tetraen-3beta-ol by forming the C-22(23) double bond in the sterol side chain. Finally, ergosta-5,7,22,24(28)-tetraen-3beta-ol is substrate of the C-24(28) sterol reductase ERG4 to produce ergosterol. Plays a role in maintaining mitochondrial and plasma membrane integrity and consequently impacting the iron homeostasis, respiratory metabolism and antioxidant response. The polypeptide is Ergosterol biosynthesis protein 29 (Saccharomyces cerevisiae (strain ATCC 204508 / S288c) (Baker's yeast)).